The primary structure comprises 394 residues: Stearoyl-[acyl-carrier-protein] 9-desaturase 1, chloroplastic (394 aa).

Residues 1–37 (MVMAMDRIALFSSSSSVYHHGSSHSHGSKSSRVFTIR) constitute a chloroplast transit peptide. Residues Glu-135, Glu-173, His-176, Glu-226, Glu-259, and His-262 each contribute to the Fe cation site.

Belongs to the fatty acid desaturase type 2 family. As to quaternary structure, homodimer. It depends on Fe(2+) as a cofactor. In terms of tissue distribution, ubiquitously expressed.

The protein localises to the plastid. It is found in the chloroplast. The enzyme catalyses octadecanoyl-[ACP] + 2 reduced [2Fe-2S]-[ferredoxin] + O2 + 2 H(+) = (9Z)-octadecenoyl-[ACP] + 2 oxidized [2Fe-2S]-[ferredoxin] + 2 H2O. The protein operates within lipid metabolism; fatty acid metabolism. Functionally, converts stearoyl-ACP to oleoyl-ACP by introduction of a cis double bond between carbons 9 and 10 of the acyl chain. The chain is Stearoyl-[acyl-carrier-protein] 9-desaturase 1, chloroplastic (S-ACP-DES1) from Arabidopsis thaliana (Mouse-ear cress).